Here is a 590-residue protein sequence, read N- to C-terminus: Leucine-rich repeat transmembrane neuronal protein 4 (590 aa).

A signal peptide spans 1–30; that stretch reads MGFRLITQLKGMSVLLVLFPTLLLVMLTGA. Positions 31 to 59 constitute an LRRNT domain; the sequence is QRACPKNCRCDGKIVYCESHAFADIPENI. Over 31 to 424 the chain is Extracellular; sequence QRACPKNCRC…HEYEHVSFHK (394 aa). A glycan (N-linked (GlcNAc...) asparagine) is linked at Asn58. 10 LRR repeats span residues 60–83, 84–107, 108–131, 132–155, 157–179, 180–203, 205–227, 228–251, 252–275, and 276–299; these read SGGS…QFAG, LNQL…AFQG, IRRL…TFHP, VPNL…QFKG, RKLI…VFQD, CRNL…AFAG, LKLK…HFPR, LFNL…LTWT, WSSL…TFKC, and LPNL…TVNA. The N-linked (GlcNAc...) asparagine glycan is linked to Asn126. Asn291 carries an N-linked (GlcNAc...) asparagine glycan. In terms of domain architecture, LRRCT spans 311-362; the sequence is NMWECSRSICPLFYWLKNFKGNKESTMICAGPKHIQGEKVSDAVETYNICSD. A helical membrane pass occupies residues 425 to 445; that stretch reads IIAGSVALFLSVAMILLVIYV. Residues 446–590 are Cytoplasmic-facing; that stretch reads SWKRYPASMK…PAIYLERITN (145 aa).

It belongs to the LRRTM family. In terms of assembly, peripherally associated with AMPAR complex. AMPAR complex consists of an inner core made of 4 pore-forming GluA/GRIA proteins (GRIA1, GRIA2, GRIA3 and GRIA4) and 4 major auxiliary subunits arranged in a twofold symmetry. One of the two pairs of distinct binding sites is occupied either by CNIH2, CNIH3 or CACNG2, CACNG3. The other harbors CACNG2, CACNG3, CACNG4, CACNG8 or GSG1L. This inner core of AMPAR complex is complemented by outer core constituents binding directly to the GluA/GRIA proteins at sites distinct from the interaction sites of the inner core constituents. Outer core constituents include at least PRRT1, PRRT2, CKAMP44/SHISA9, FRRS1L and NRN1. The proteins of the inner and outer core serve as a platform for other, more peripherally associated AMPAR constituents, including LRRTM4. Alone or in combination, these auxiliary subunits control the gating and pharmacology of the AMPAR complex and profoundly impact their biogenesis and protein processing. In terms of tissue distribution, expressed in the brain (at protein level).

It localises to the cell membrane. It is found in the postsynaptic cell membrane. In terms of biological role, may play a role in the development and maintenance of the nervous system. Exhibits strong synaptogenic activity, restricted to excitatory presynaptic differentiation. The protein is Leucine-rich repeat transmembrane neuronal protein 4 (Lrrtm4) of Rattus norvegicus (Rat).